The chain runs to 307 residues: Putative ankyrin repeat protein R229 (307 aa).

6 ANK repeats span residues 135-164 (ASRV…DINV), 165-194 (DNDK…NVHA), 196-224 (DDEA…NVNA), 226-254 (NDYA…NPMA), 256-284 (RYYP…SMVY), and 286-307 (SYAM…LLLD).

This chain is Putative ankyrin repeat protein R229, found in Acanthamoeba polyphaga (Amoeba).